The sequence spans 409 residues: Dihydroorotase (409 aa).

Residues His57 and His59 each coordinate Zn(2+). Residues 59-61 (HLR) and Asn91 contribute to the substrate site. Positions 139, 168, 208, and 276 each coordinate Zn(2+). The residue at position 139 (Lys139) is an N6-carboxylysine. Asp276 is a catalytic residue. Residues His280 and 290-291 (AG) contribute to the substrate site.

The protein belongs to the metallo-dependent hydrolases superfamily. DHOase family. Class I DHOase subfamily. Zn(2+) is required as a cofactor.

It carries out the reaction (S)-dihydroorotate + H2O = N-carbamoyl-L-aspartate + H(+). Its pathway is pyrimidine metabolism; UMP biosynthesis via de novo pathway; (S)-dihydroorotate from bicarbonate: step 3/3. In terms of biological role, catalyzes the reversible cyclization of carbamoyl aspartate to dihydroorotate. The polypeptide is Dihydroorotase (Thermococcus kodakarensis (strain ATCC BAA-918 / JCM 12380 / KOD1) (Pyrococcus kodakaraensis (strain KOD1))).